The primary structure comprises 664 residues: Methionine--tRNA ligase (664 aa).

The short motif at 15-25 (YYPSGKAHIGH) is the 'HIGH' region element. Residues 310–314 (KMSKS) carry the 'KMSKS' region motif. Residue Lys313 participates in ATP binding. In terms of domain architecture, tRNA-binding spans 563–664 (DFDKIDLRVA…SALPNGAKVK (102 aa)).

This sequence belongs to the class-I aminoacyl-tRNA synthetase family. MetG type 2B subfamily. Homodimer.

It is found in the cytoplasm. It carries out the reaction tRNA(Met) + L-methionine + ATP = L-methionyl-tRNA(Met) + AMP + diphosphate. Its function is as follows. Is required not only for elongation of protein synthesis but also for the initiation of all mRNA translation through initiator tRNA(fMet) aminoacylation. This is Methionine--tRNA ligase (metG) from Listeria monocytogenes serovar 1/2a (strain ATCC BAA-679 / EGD-e).